A 1368-amino-acid chain; its full sequence is DNA-directed RNA polymerase subunit beta (1368 aa).

The protein belongs to the RNA polymerase beta chain family. The RNAP catalytic core consists of 2 alpha, 1 beta, 1 beta' and 1 omega subunit. When a sigma factor is associated with the core the holoenzyme is formed, which can initiate transcription.

The catalysed reaction is RNA(n) + a ribonucleoside 5'-triphosphate = RNA(n+1) + diphosphate. In terms of biological role, DNA-dependent RNA polymerase catalyzes the transcription of DNA into RNA using the four ribonucleoside triphosphates as substrates. The protein is DNA-directed RNA polymerase subunit beta of Legionella pneumophila subsp. pneumophila (strain Philadelphia 1 / ATCC 33152 / DSM 7513).